Reading from the N-terminus, the 319-residue chain is Aspartate carbamoyltransferase catalytic subunit (319 aa).

Carbamoyl phosphate-binding residues include R64 and T65. K92 serves as a coordination point for L-aspartate. R114, H142, and Q145 together coordinate carbamoyl phosphate. L-aspartate contacts are provided by R175 and R229. Carbamoyl phosphate-binding residues include G270 and P271.

This sequence belongs to the aspartate/ornithine carbamoyltransferase superfamily. ATCase family. Heterododecamer (2C3:3R2) of six catalytic PyrB chains organized as two trimers (C3), and six regulatory PyrI chains organized as three dimers (R2).

It carries out the reaction carbamoyl phosphate + L-aspartate = N-carbamoyl-L-aspartate + phosphate + H(+). Its pathway is pyrimidine metabolism; UMP biosynthesis via de novo pathway; (S)-dihydroorotate from bicarbonate: step 2/3. In terms of biological role, catalyzes the condensation of carbamoyl phosphate and aspartate to form carbamoyl aspartate and inorganic phosphate, the committed step in the de novo pyrimidine nucleotide biosynthesis pathway. The chain is Aspartate carbamoyltransferase catalytic subunit from Rhodospirillum rubrum (strain ATCC 11170 / ATH 1.1.1 / DSM 467 / LMG 4362 / NCIMB 8255 / S1).